Here is a 261-residue protein sequence, read N- to C-terminus: Cytochrome c oxidase subunit 3 (261 aa).

Topologically, residues 2 to 15 are mitochondrial matrix; that stretch reads THQTHAYHMVNPSP. The chain crosses the membrane as a helical span at residues 16-34; sequence WPLTGALSALLLTSGLVMW. Residues 35–40 lie on the Mitochondrial intermembrane side of the membrane; sequence FHYNST. The chain crosses the membrane as a helical span at residues 41–66; sequence ILLSLGLLTNILTMYQWWRDIIREGT. Over 67–72 the chain is Mitochondrial matrix; the sequence is YQGHHT. Residues 73 to 105 form a helical membrane-spanning segment; that stretch reads PIVQKGLRYGMILFIVSEVFFFAGFFWAFYHSS. Residues 106–128 are Mitochondrial intermembrane-facing; that stretch reads LVPTHDLGGCWPPTGITPLNPLE. The chain crosses the membrane as a helical span at residues 129–152; sequence VPLLNTSVLLASGVSITWAHHSLM. Topologically, residues 153–155 are mitochondrial matrix; that stretch reads EGN. Residues 156 to 183 traverse the membrane as a helical segment; that stretch reads RNHMNQALLITILLGLYFTILQASEYFE. Over 184 to 190 the chain is Mitochondrial intermembrane; it reads TSFSISD. The chain crosses the membrane as a helical span at residues 191 to 223; it reads GIYGSTFFMATGFHGLHVIIGSTFLIVCLLRQL. At 224–232 the chain is on the mitochondrial matrix side; that stretch reads KFHFTSKHH. A helical membrane pass occupies residues 233–256; that stretch reads FGFEAAAWYWHFVDVVWLFLYVSI. At 257–261 the chain is on the mitochondrial intermembrane side; the sequence is YWWGS.

This sequence belongs to the cytochrome c oxidase subunit 3 family. As to quaternary structure, component of the cytochrome c oxidase (complex IV, CIV), a multisubunit enzyme composed of 14 subunits. The complex is composed of a catalytic core of 3 subunits MT-CO1, MT-CO2 and MT-CO3, encoded in the mitochondrial DNA, and 11 supernumerary subunits COX4I, COX5A, COX5B, COX6A, COX6B, COX6C, COX7A, COX7B, COX7C, COX8 and NDUFA4, which are encoded in the nuclear genome. The complex exists as a monomer or a dimer and forms supercomplexes (SCs) in the inner mitochondrial membrane with NADH-ubiquinone oxidoreductase (complex I, CI) and ubiquinol-cytochrome c oxidoreductase (cytochrome b-c1 complex, complex III, CIII), resulting in different assemblies (supercomplex SCI(1)III(2)IV(1) and megacomplex MCI(2)III(2)IV(2)).

It localises to the mitochondrion inner membrane. The enzyme catalyses 4 Fe(II)-[cytochrome c] + O2 + 8 H(+)(in) = 4 Fe(III)-[cytochrome c] + 2 H2O + 4 H(+)(out). In terms of biological role, component of the cytochrome c oxidase, the last enzyme in the mitochondrial electron transport chain which drives oxidative phosphorylation. The respiratory chain contains 3 multisubunit complexes succinate dehydrogenase (complex II, CII), ubiquinol-cytochrome c oxidoreductase (cytochrome b-c1 complex, complex III, CIII) and cytochrome c oxidase (complex IV, CIV), that cooperate to transfer electrons derived from NADH and succinate to molecular oxygen, creating an electrochemical gradient over the inner membrane that drives transmembrane transport and the ATP synthase. Cytochrome c oxidase is the component of the respiratory chain that catalyzes the reduction of oxygen to water. Electrons originating from reduced cytochrome c in the intermembrane space (IMS) are transferred via the dinuclear copper A center (CU(A)) of subunit 2 and heme A of subunit 1 to the active site in subunit 1, a binuclear center (BNC) formed by heme A3 and copper B (CU(B)). The BNC reduces molecular oxygen to 2 water molecules using 4 electrons from cytochrome c in the IMS and 4 protons from the mitochondrial matrix. This chain is Cytochrome c oxidase subunit 3, found in Rattus norvegicus (Rat).